The following is a 279-amino-acid chain: Urease accessory protein UreD (279 aa).

It belongs to the UreD family. As to quaternary structure, ureD, UreF and UreG form a complex that acts as a GTP-hydrolysis-dependent molecular chaperone, activating the urease apoprotein by helping to assemble the nickel containing metallocenter of UreC. The UreE protein probably delivers the nickel.

The protein localises to the cytoplasm. In terms of biological role, required for maturation of urease via the functional incorporation of the urease nickel metallocenter. This chain is Urease accessory protein UreD, found in Paracoccus denitrificans (strain Pd 1222).